Here is a 946-residue protein sequence, read N- to C-terminus: Serine/arginine repetitive matrix protein 1 (946 aa).

Position 1 is an N-acetylmethionine (methionine 1). The tract at residues 1 to 151 (MDAGFFRGTS…ASLKKQDEDK (151 aa)) is necessary for DNA and RNA-binding. Residues 1-156 (MDAGFFRGTS…QDEDKDKRDK (156 aa)) form a necessary for mRNA 3'-end cleavage and cytoplasmic accumulation region. Arginine 7 bears the Citrulline mark. Residues 27-126 (QLKFAECLEK…AGIPSAFLEL (100 aa)) form the PWI domain. Lysine 127 participates in a covalent cross-link: Glycyl lysine isopeptide (Lys-Gly) (interchain with G-Cter in SUMO2). The residue at position 140 (lysine 140) is an N6-acetyllysine. The segment covering 142 to 170 (ASLKKQDEDKDKRDKEEKESSREKRERSR) has biased composition (basic and acidic residues). The disordered stretch occupies residues 142–946 (ASLKKQDEDK…MRKAQVSPQS (805 aa)). Residues 171-207 (SPRRRKSRSPSPRRRSSPVRRERKRSHSRSPRHRTKS) are compositionally biased toward basic residues. Positions 214 to 234 (PEKKEKSPELPEPSVRMKDSS) are enriched in basic and acidic residues. Residues serine 220 and serine 227 each carry the phosphoserine modification. Lysine 231 is covalently cross-linked (Glycyl lysine isopeptide (Lys-Gly) (interchain with G-Cter in SUMO1); alternate). A Glycyl lysine isopeptide (Lys-Gly) (interchain with G-Cter in SUMO2); alternate cross-link involves residue lysine 231. 2 positions are modified to phosphoserine: serine 234 and serine 240. A Phosphothreonine modification is found at threonine 241. Residues 246 to 273 (KAPKPEPVPEPKEPSPEKNSKKEKEKTR) show a composition bias toward basic and acidic residues. Lysine 249 participates in a covalent cross-link: Glycyl lysine isopeptide (Lys-Gly) (interchain with G-Cter in SUMO2). Serine 260 carries the phosphoserine modification. Basic residues-rich tracts occupy residues 274-327 (PRSR…RTPP) and 334-349 (PRHRRSRSPGRRRRRS). The segment at 298-707 (RRHRSRSRSY…NKRHSPSPRP (410 aa)) is necessary for speckles and matrix localization. Low complexity predominate over residues 350-366 (SASLSGSSSSSSSSRSR). Phosphoserine occurs at positions 387, 389, 391, and 400. Threonine 404 bears the Phosphothreonine mark. At serine 412 the chain carries Phosphoserine. Residue threonine 414 is modified to Phosphothreonine. 4 positions are modified to phosphoserine: serine 418, serine 427, serine 429, and serine 434. The span at 426-436 (VSVSPGRTSGK) shows a compositional bias: polar residues. Lysine 445 is covalently cross-linked (Glycyl lysine isopeptide (Lys-Gly) (interchain with G-Cter in SUMO2)). Phosphoserine occurs at positions 448 and 450. A Glycyl lysine isopeptide (Lys-Gly) (interchain with G-Cter in SUMO2) cross-link involves residue lysine 457. 2 positions are modified to phosphoserine: serine 461 and serine 463. A Glycyl lysine isopeptide (Lys-Gly) (interchain with G-Cter in SUMO2) cross-link involves residue lysine 470. Serine 476 is modified (phosphoserine). A compositionally biased stretch (low complexity) spans 476–499 (SVQQRRQYRRQNQQSSSDSGSSST). Residues 501-516 (EDERPKRSHVKNGEVG) are compositionally biased toward basic and acidic residues. Serine 522, serine 524, serine 526, serine 528, serine 530, serine 561, serine 563, serine 572, and serine 574 each carry phosphoserine. Residues 555–572 (SSRRRRSPSPPPARRRRS) are compositionally biased toward basic residues. The segment covering 574–585 (SPAPPPPPPPPP) has biased composition (pro residues). Residues 586–611 (PRRRRSPTPPPRRRTPSPPPRRRSPS) are compositionally biased toward basic residues. Phosphothreonine occurs at positions 593 and 600. Serine 602 carries the post-translational modification Phosphoserine. Positions 612 to 624 (PRRYSPPIQRRYS) are enriched in low complexity. Phosphotyrosine is present on tyrosine 615. Phosphoserine is present on residues serine 616, serine 624, and serine 626. A Phosphothreonine modification is found at threonine 633. A phosphoserine mark is found at serine 635, serine 645, serine 647, serine 655, and serine 657. Over residues 640–655 (PKRRASPSPPPKRRVS) the composition is skewed to basic residues. The segment covering 668 to 682 (TKRRSPSLSSKHRKG) has biased composition (basic residues). Residues 704 to 718 (SPRPRAPQTSSPPPV) are compositionally biased toward pro residues. 6 positions are modified to phosphoserine: serine 713, serine 714, serine 723, serine 725, serine 731, and serine 733. Positions 724-736 (ASPQGRQSPSPST) are enriched in polar residues. Position 736 is a phosphothreonine (threonine 736). Phosphoserine is present on residues serine 779, serine 781, serine 789, serine 793, serine 795, serine 797, serine 810, serine 814, serine 816, and serine 818. Positions 779-800 (SPSPQSVRRVSSSRSVSGSPEP) are enriched in low complexity. Position 819 is a phosphothreonine (threonine 819). Phosphoserine is present on residues serine 822 and serine 832. Polar residues predominate over residues 833 to 842 (PTPSLSPARN). Phosphothreonine is present on threonine 834. Residues serine 836, serine 838, and serine 843 each carry the phosphoserine modification. A compositionally biased stretch (basic residues) spans 850–875 (KKKKKKKDKKHKKDKKHKKHKKHKKE). Residues 878 to 907 (VTIATPATAAPAAVSAATTTSAQEEPAAAP) show a composition bias toward low complexity. Threonine 913 is subject to Phosphothreonine. Position 915 is a phosphoserine (serine 915). Basic and acidic residues predominate over residues 924–934 (DLERHLREKAL). Phosphoserine is present on serine 943.

It belongs to the splicing factor SR family. Identified in the spliceosome C complex. Found in a pre-mRNA splicing complex with SFRS4, SFRS5, SNRP70, SNRPA1, SRRM1 and SRRM2. Component of the minor spliceosome, which splices U12-type introns. Found in a pre-mRNA exonic splicing enhancer (ESE) complex with SNRP70, SNRPA1, SRRM1 and TRA2B/SFRS10. Found in a mRNA splicing-dependent exon junction complex (EJC) with DEK, PRPF8, NCBP1, RBM8A, RNPS1, SRRM1 and ALYREF/THOC4. Interacts with DDX39B, CPSF1, RBM8A, RNPS1, and ALYREF/THOC4. Seems to be a compound of RNA export complexes that are released from speckles in a ATP-dependent manner. Citrullinated by PADI4. Post-translationally, phosphorylated on multiple serine and threonine residues by DYRK3 during the G2-to-M transition, after the nuclear-envelope breakdown. Phosphorylation by DYRK3 promotes disassembly of nuclear speckles.

Its subcellular location is the nucleus matrix. It localises to the nucleus speckle. Functionally, part of pre- and post-splicing multiprotein mRNP complexes. As a component of the minor spliceosome, involved in the splicing of U12-type introns in pre-mRNAs. Involved in numerous pre-mRNA processing events. Promotes constitutive and exonic splicing enhancer (ESE)-dependent splicing activation by bridging together sequence-specific (SR family proteins, SFRS4, SFRS5 and TRA2B/SFRS10) and basal snRNP (SNRP70 and SNRPA1) factors of the spliceosome. Stimulates mRNA 3'-end cleavage independently of the formation of an exon junction complex. Binds both pre-mRNA and spliced mRNA 20-25 nt upstream of exon-exon junctions. Binds RNA and DNA with low sequence specificity and has similar preference for either double- or single-stranded nucleic acid substrates. The polypeptide is Serine/arginine repetitive matrix protein 1 (Srrm1) (Mus musculus (Mouse)).